Consider the following 130-residue polypeptide: MKRIVTFVLLIFCALPVLCSQTSAPPKRHISCRFTQIWNIPSCYNKQSDLSEAWLYAIISVMVFCSTIFALAIYPYLDIGWNAIDAMNHPTFPAPNVIPLQQVIAPINQPRPPSPTPTEISYFNLTGGDD.

A signal peptide spans Met1–Cys19. A helical transmembrane segment spans residues Ala53–Leu77.

Belongs to the adenoviridae E3_14 family. Phosphorylated on serine; O-glycosylated, but not N-glycosylated.

It localises to the host membrane. Down-regulates the EGF receptor and prevents cytolysis by TNF. The protein is Early E3B 14.5 kDa protein of Human adenovirus C serotype 6 (HAdV-6).